A 644-amino-acid chain; its full sequence is Arginine--tRNA ligase (644 aa).

Positions 129–139 (ANPIHPLHLGH) match the 'HIGH' region motif.

It belongs to the class-I aminoacyl-tRNA synthetase family.

Its subcellular location is the cytoplasm. It carries out the reaction tRNA(Arg) + L-arginine + ATP = L-arginyl-tRNA(Arg) + AMP + diphosphate. In Aeropyrum pernix (strain ATCC 700893 / DSM 11879 / JCM 9820 / NBRC 100138 / K1), this protein is Arginine--tRNA ligase (argS).